We begin with the raw amino-acid sequence, 83 residues long: UPF0147 protein TK2131 (83 aa).

Belongs to the UPF0147 family.

This is UPF0147 protein TK2131 from Thermococcus kodakarensis (strain ATCC BAA-918 / JCM 12380 / KOD1) (Pyrococcus kodakaraensis (strain KOD1)).